The following is a 133-amino-acid chain: Small ribosomal subunit protein uS9 (133 aa).

The segment covering 98 to 113 (RKPLKTEGHLSRDPRA) has biased composition (basic and acidic residues). The tract at residues 98–133 (RKPLKTEGHLSRDPRAKERRKYGLKKARKAPQFSKR) is disordered. Over residues 114 to 133 (KERRKYGLKKARKAPQFSKR) the composition is skewed to basic residues.

This sequence belongs to the universal ribosomal protein uS9 family.

In Parasynechococcus marenigrum (strain WH8102), this protein is Small ribosomal subunit protein uS9.